The sequence spans 664 residues: DNA ligase (664 aa).

Residues Asp-31–Asp-35, Ser-80–Leu-81, and Glu-110 contribute to the NAD(+) site. Catalysis depends on Lys-112, which acts as the N6-AMP-lysine intermediate. NAD(+)-binding residues include Arg-133 and Glu-169. A BRCT 1 domain is found at Leu-237 to Ile-257. Lys-284 and Lys-308 together coordinate NAD(+). 4 residues coordinate Zn(2+): Cys-402, Cys-405, Cys-420, and Cys-426. Positions Asn-586–Glu-664 constitute a BRCT 2 domain.

This sequence belongs to the NAD-dependent DNA ligase family. LigA subfamily. The cofactor is Mg(2+). Mn(2+) serves as cofactor.

It carries out the reaction NAD(+) + (deoxyribonucleotide)n-3'-hydroxyl + 5'-phospho-(deoxyribonucleotide)m = (deoxyribonucleotide)n+m + AMP + beta-nicotinamide D-nucleotide.. Functionally, DNA ligase that catalyzes the formation of phosphodiester linkages between 5'-phosphoryl and 3'-hydroxyl groups in double-stranded DNA using NAD as a coenzyme and as the energy source for the reaction. It is essential for DNA replication and repair of damaged DNA. This chain is DNA ligase, found in Christiangramia forsetii (strain DSM 17595 / CGMCC 1.15422 / KT0803) (Gramella forsetii).